We begin with the raw amino-acid sequence, 102 residues long: Large ribosomal subunit protein bL21 (102 aa).

It belongs to the bacterial ribosomal protein bL21 family. In terms of assembly, part of the 50S ribosomal subunit. Contacts protein L20.

In terms of biological role, this protein binds to 23S rRNA in the presence of protein L20. The chain is Large ribosomal subunit protein bL21 from Stenotrophomonas maltophilia (strain K279a).